The following is a 394-amino-acid chain: MHLLDTLAEGLKEIDARGLRRRRRTADTPCAAHMTVDGRAIIGFASNDYLGLAAHPQLIAAIAEGAQRYGAGSGGSHLLGGHSRAHAQLEDDLAEFVGGFVENARALYFSTGYMANLATLTALAGRGTTLFSDALNHASLIDGARLSRADVQIYPHCDTDALSAMLEASDADVKVIVSDTVFSMDGDIAPLPRLLELAEQHGAWLIVDDAHGFGVLGPQGRGAIAQAALRSPNLISIGTLGKAAGVSGAFVAAHETVIEWLVQRARPYIFTTASVPAAAHAVSASLRIIGGEEGDARRAHLQQLIGRTRAMLKATPWLPVDSHTAVQPLIIGANDATLEIAATLDRAGLWVPAIRPPTVPTGTSRLRISLSAAHSQADLDRLEAGLQQLGAKAA.

R21 provides a ligand contact to substrate. Residue 112–113 (GY) participates in pyridoxal 5'-phosphate binding. Substrate is bound at residue H137. Positions 183, 211, and 239 each coordinate pyridoxal 5'-phosphate. An N6-(pyridoxal phosphate)lysine modification is found at K242. T358 provides a ligand contact to substrate.

The protein belongs to the class-II pyridoxal-phosphate-dependent aminotransferase family. BioF subfamily. As to quaternary structure, homodimer. Requires pyridoxal 5'-phosphate as cofactor.

The catalysed reaction is 6-carboxyhexanoyl-[ACP] + L-alanine + H(+) = (8S)-8-amino-7-oxononanoate + holo-[ACP] + CO2. It functions in the pathway cofactor biosynthesis; biotin biosynthesis. Catalyzes the decarboxylative condensation of pimeloyl-[acyl-carrier protein] and L-alanine to produce 8-amino-7-oxononanoate (AON), [acyl-carrier protein], and carbon dioxide. The polypeptide is 8-amino-7-oxononanoate synthase (Paraburkholderia xenovorans (strain LB400)).